Here is an 81-residue protein sequence, read N- to C-terminus: Protein Vpu (81 aa).

The Extracellular segment spans residues 1 to 7 (MQSLEIL). A helical transmembrane segment spans residues 8–28 (AIVALVVAAILAIVVWTIVGI). Residues 29–81 (EIRKTLRQKKIDRLIDRIRERAEDSGNESDGDEEELSALVEMGHHAPWDVDDL) are Cytoplasmic-facing. Residues 50-81 (AEDSGNESDGDEEELSALVEMGHHAPWDVDDL) form a disordered region. Phosphoserine; by host CK2 occurs at positions 53 and 57. Residues 53 to 64 (SGNESDGDEEEL) show a composition bias toward acidic residues. Basic and acidic residues predominate over residues 70-81 (MGHHAPWDVDDL).

Belongs to the HIV-1 VPU protein family. Homopentamer. Interacts with host CD4 and BRTC; these interactions induce proteasomal degradation of CD4. Interacts with host BST2; this interaction leads to the degradation of host BST2. Interacts with host FBXW11. Interacts with host AP1M1; this interaction plays a role in the mistrafficking and subsequent degradation of host BST2. Interacts with host RANBP2; this interaction allows Vpu to down-regulate host BLM sumoylation. Phosphorylated by host CK2. This phosphorylation is necessary for interaction with human BTRC and degradation of CD4.

It is found in the host membrane. Its activity is regulated as follows. Ion channel activity is inhibited by hexamethylene amiloride in vitro. Functionally, enhances virion budding by targeting host CD4 and Tetherin/BST2 to proteasome degradation. Degradation of CD4 prevents any unwanted premature interactions between viral Env and its host receptor CD4 in the endoplasmic reticulum. Degradation of antiretroviral protein Tetherin/BST2 is important for virion budding, as BST2 tethers new viral particles to the host cell membrane. Mechanistically, Vpu bridges either CD4 or BST2 to BTRC, a substrate recognition subunit of the Skp1/Cullin/F-box protein E3 ubiquitin ligase, induces their ubiquitination and subsequent proteasomal degradation. The alteration of the E3 ligase specificity by Vpu seems to promote the degradation of host IKBKB, leading to NF-kappa-B down-regulation and subsequent apoptosis. Acts as a viroporin that forms an oligomeric ion channel in membranes. Modulates the host DNA repair mechanisms to promote degradation of nuclear viral cDNA in cells that are already productively infected in order to suppress immune sensing and proviral hyper-integration (superinfection). Manipulates PML-NBs and modulates SUMOylation of host BLM protein thereby enhancing its DNA-end processing activity toward viral unintegrated linear DNA. Also inhibits RAD52-mediated homologous repair of viral cDNA, preventing the generation of dead-end circular forms of single copies of the long terminal repeat and permitting sustained nucleolytic attack. This chain is Protein Vpu, found in Homo sapiens (Human).